Reading from the N-terminus, the 322-residue chain is 3-alpha-hydroxysteroid dehydrogenase (322 aa).

A Blocked amino end (Met) modification is found at M1. NADP(+) contacts are provided by residues 20-24 (GFGTT) and D50. Y55 (proton donor) is an active-site residue. Residue H117 participates in substrate binding. NADP(+)-binding positions include 166–167 (SN), Q190, and 216–221 (YCTLGS). W227 provides a ligand contact to substrate. Residue 270 to 280 (RSFNAKRIKEL) coordinates NADP(+).

This sequence belongs to the aldo/keto reductase family. In terms of assembly, monomer. As to expression, in brain, highest levels found in olfactory bulb. Moderate levels present in cerebellum, cerebral cortex, hypothalamus and pituitary. Low levels present in amygdala, brain stem, caudate putamen, cingulate cortex, hippocampus, midbrain, and thalamus.

The protein resides in the cytoplasm. It carries out the reaction a 3alpha-hydroxysteroid + NADP(+) = a 3-oxosteroid + NADPH + H(+). It catalyses the reaction a 3alpha-hydroxysteroid + NAD(+) = a 3-oxosteroid + NADH + H(+). With respect to regulation, potently inhibited by the nonsteroidal anti-inflammatory drugs (NSAID). In terms of biological role, besides being a 3-alpha-hydroxysteroid dehydrogenase, the enzyme can accomplish diverse functions: as quinone reductase, as an aromatic alcohol dehydrogenase, as dihydrodiol dehydrogenase, and as 9-, 11-, and 15-hydroxyprostaglandin dehydrogenase. This Rattus norvegicus (Rat) protein is 3-alpha-hydroxysteroid dehydrogenase (Akr1c9).